The following is a 442-amino-acid chain: UDP-glucosyltransferase 29 (442 aa).

The Proton acceptor role is filled by histidine 20. Residue histidine 20 coordinates an anthocyanidin. The active-site Charge relay is aspartate 116. UDP-alpha-D-glucose is bound by residues threonine 138, alanine 318, glutamine 320, histidine 335, tryptophan 338, serine 340, glutamate 343, aspartate 359, and glutamine 360.

It belongs to the UDP-glycosyltransferase family. Expressed at higher levels in roots than in leaves.

The catalysed reaction is (20S)-ginsenoside F2 + UDP-alpha-D-glucose = (20S)-ginsenoside Rd + UDP + H(+). The enzyme catalyses (20S)-ginsenoside Rh2 + UDP-alpha-D-glucose = (20S)-ginsenoside Rg3 + UDP + H(+). The protein operates within secondary metabolite biosynthesis; terpenoid biosynthesis. Its function is as follows. Component of the dammarane-type triterpene saponins (e.g. PPD-type ginsenosides or panaxosides) biosynthetic pathway. Glycosyltransferase that catalyzes the conversion of ginsenoside Rh2 to ginsenoside Rg3. Triggers the biosynthesis of ginsenoside Rd from ginsenoside F2. The protein is UDP-glucosyltransferase 29 of Panax ginseng (Korean ginseng).